The chain runs to 360 residues: LETM1 domain-containing protein 1 (360 aa).

The interval 1 to 110 is required and sufficient for mitochondrial import; the sequence is MALSRVCWAR…KKARRIKTNM (110 aa). Residues 1–137 lie on the Cytoplasmic side of the membrane; sequence MALSRVCWAR…LRQFRQDVTK (137 aa). A helical membrane pass occupies residues 138–158; the sequence is CLFLGIISIPPFANYLVFLLM. Topologically, residues 159–360 are mitochondrial intermembrane; that stretch reads YLFPRQLLIR…LSTNYLGTRR (202 aa). The region spanning 186 to 360 is the Letm1 RBD domain; that stretch reads FRKQSHPEII…LSTNYLGTRR (175 aa).

As to quaternary structure, interacts with BRI3BP. Interacts (via C-terminal) with SMARCA4; the interaction regulates transcriptional expression of thermogenic genes in brown adipose tissue. As to expression, kidney, liver, skeletal muscle, heart and brain. Overexpressed in various tumors including leukemia, lymphoma, and carcinomas of the breast, kidney, ovary, stomach, colon and uterine cervix.

It is found in the mitochondrion outer membrane. Its subcellular location is the nucleus. The protein resides in the mitochondrion inner membrane. Functionally, plays an essential role for mitochondrial structure and function, as well as thermogenesis of brown adipocytes. In brown adipose tissue also localizes in the nucleus where it interacts with the chromatin remodeler SMARCA4 to regulate thermogenic genes expression, such as UCP1. May regulate phagocytosis and inflammatory responses to lipopolysaccharide in macrophages. Involved in tumorigenesis and may function as a negative regulator of the p53/TP53. This chain is LETM1 domain-containing protein 1, found in Homo sapiens (Human).